Reading from the N-terminus, the 350-residue chain is tRNA uridine(34) hydroxylase (350 aa).

Residues Asp146–Leu240 enclose the Rhodanese domain. The active-site Cysteine persulfide intermediate is the Cys200.

Belongs to the TrhO family.

The enzyme catalyses uridine(34) in tRNA + AH2 + O2 = 5-hydroxyuridine(34) in tRNA + A + H2O. Catalyzes oxygen-dependent 5-hydroxyuridine (ho5U) modification at position 34 in tRNAs, the first step in 5-carboxymethoxyuridine (cmo5U) biosynthesis. May be part of an alternate pathway, which is able to bypass cmo5U biogenesis in a subset of tRNAs under aerobic conditions. This Escherichia coli O9:H4 (strain HS) protein is tRNA uridine(34) hydroxylase.